The primary structure comprises 382 residues: Dual-specificity RNA methyltransferase RlmN (382 aa).

Catalysis depends on E95, which acts as the Proton acceptor. The Radical SAM core domain occupies 101 to 347; the sequence is EDDRGTLCIS…TTVRKTRGDD (247 aa). An intrachain disulfide couples C108 to C352. C115, C119, and C122 together coordinate [4Fe-4S] cluster. S-adenosyl-L-methionine contacts are provided by residues 178 to 179, S210, 232 to 234, and N309; these read GE and SLH. Residue C352 is the S-methylcysteine intermediate of the active site.

It belongs to the radical SAM superfamily. RlmN family. It depends on [4Fe-4S] cluster as a cofactor.

Its subcellular location is the cytoplasm. It catalyses the reaction adenosine(2503) in 23S rRNA + 2 reduced [2Fe-2S]-[ferredoxin] + 2 S-adenosyl-L-methionine = 2-methyladenosine(2503) in 23S rRNA + 5'-deoxyadenosine + L-methionine + 2 oxidized [2Fe-2S]-[ferredoxin] + S-adenosyl-L-homocysteine. It carries out the reaction adenosine(37) in tRNA + 2 reduced [2Fe-2S]-[ferredoxin] + 2 S-adenosyl-L-methionine = 2-methyladenosine(37) in tRNA + 5'-deoxyadenosine + L-methionine + 2 oxidized [2Fe-2S]-[ferredoxin] + S-adenosyl-L-homocysteine. Its function is as follows. Specifically methylates position 2 of adenine 2503 in 23S rRNA and position 2 of adenine 37 in tRNAs. m2A2503 modification seems to play a crucial role in the proofreading step occurring at the peptidyl transferase center and thus would serve to optimize ribosomal fidelity. This is Dual-specificity RNA methyltransferase RlmN from Bordetella avium (strain 197N).